The chain runs to 290 residues: Probable transcriptional regulatory protein HAH1 (290 aa).

The protein belongs to the TACO1 family.

Its subcellular location is the mitochondrion. This is Probable transcriptional regulatory protein HAH1 from Saccharomyces cerevisiae (strain ATCC 204508 / S288c) (Baker's yeast).